Here is a 137-residue protein sequence, read N- to C-terminus: Large ribosomal subunit protein uL16 (137 aa).

Belongs to the universal ribosomal protein uL16 family. Part of the 50S ribosomal subunit.

Functionally, binds 23S rRNA and is also seen to make contacts with the A and possibly P site tRNAs. The sequence is that of Large ribosomal subunit protein uL16 from Oleidesulfovibrio alaskensis (strain ATCC BAA-1058 / DSM 17464 / G20) (Desulfovibrio alaskensis).